The sequence spans 309 residues: Manganese ABC transporter substrate-binding lipoprotein PsaA (309 aa).

An N-terminal signal peptide occupies residues 1–19 (MKKLGTLLVLFLSAIILVA). The N-palmitoyl cysteine moiety is linked to residue Cys20. A lipid anchor (S-diacylglycerol cysteine) is attached at Cys20. Residues His67, His139, Glu205, and Asp280 each coordinate Mn(2+).

It belongs to the bacterial solute-binding protein 9 family. Lipoprotein receptor antigen (Lrai) subfamily.

The protein localises to the cell membrane. Its function is as follows. Part of the ATP-binding cassette (ABC) transport system PsaABC involved in manganese import. Binds manganese with high affinity and specificity and delivers it to the membrane permease for translocation into the cytoplasm. Also acts as an adhesin which is involved on adherence to extracellular matrix. It is an important factor in pathogenesis and infection. The sequence is that of Manganese ABC transporter substrate-binding lipoprotein PsaA (psaA) from Streptococcus pneumoniae serotype 4 (strain ATCC BAA-334 / TIGR4).